The chain runs to 36 residues: Neurotoxin PRTx26An0C3 (36 aa).

Disulfide bonds link C3–C17, C10–C22, and C16–C34.

Expressed by the venom gland.

The protein resides in the secreted. In terms of biological role, neurotoxin. Causes spastic paralysis and death in mice. Moderate inhibitor of L-type calcium channels (Cav1/CACNA1). This Phoneutria nigriventer (Brazilian armed spider) protein is Neurotoxin PRTx26An0C3.